The sequence spans 732 residues: X-ray repair cross-complementing protein 5 (732 aa).

Residues 9–161 (AVVLCVDVGV…CNLKKSGISL (153 aa)) form the VWFA domain. Residues 138 to 165 (LSSPFSQDQLDVIICNLKKSGISLQFFL) form a leucine-zipper region. A Glycyl lysine isopeptide (Lys-Gly) (interchain with G-Cter in SUMO2) cross-link involves residue lysine 195. The 201-residue stretch at 253–453 (IGPNLSIKIV…CTPTEAQLSA (201 aa)) folds into the Ku domain. Residue serine 258 is modified to Phosphoserine. Lysine 265 carries the N6-acetyllysine modification. Serine 318 is subject to Phosphoserine. Lysine 332 bears the N6-acetyllysine mark. Residues lysine 532 and lysine 534 each participate in a glycyl lysine isopeptide (Lys-Gly) (interchain with G-Cter in SUMO2) cross-link. Threonine 535 carries the post-translational modification Phosphothreonine. Residues lysine 567 and lysine 569 each participate in a glycyl lysine isopeptide (Lys-Gly) (interchain with G-Cter in SUMO2) cross-link. 3 positions are modified to phosphoserine; by PRKDC: serine 578, serine 580, and serine 581. Residue lysine 666 is modified to N6-acetyllysine. Glycyl lysine isopeptide (Lys-Gly) (interchain with G-Cter in SUMO2) cross-links involve residues lysine 670 and lysine 689. The tract at residues 708-732 (PKDKAKEDTTGPEEAGDVDDLLDMI) is disordered. Threonine 716 is modified (phosphothreonine; by PRKDC). Positions 717-732 (TGPEEAGDVDDLLDMI) are enriched in acidic residues. Positions 720 to 728 (EEAGDVDDL) match the EEXXXDL motif motif.

The protein belongs to the ku80 family. Heterodimer composed of XRCC5/Ku80 and XRCC6/Ku70. Component of the core long-range non-homologous end joining (NHEJ) complex (also named DNA-PK complex) composed of PRKDC, LIG4, XRCC4, XRCC6/Ku70, XRCC5/Ku86 and NHEJ1/XLF. Additional component of the NHEJ complex includes PAXX. Following autophosphorylation, PRKDC dissociates from DNA, leading to formation of the short-range NHEJ complex, composed of LIG4, XRCC4, XRCC6/Ku70, XRCC5/Ku86 and NHEJ1/XLF. The XRCC5-XRCC6 dimer also associates with NAA15, and this complex displays DNA binding activity towards the osteocalcin FGF response element (OCFRE). In addition, XRCC5 binds to the osteoblast-specific transcription factors MSX2 and RUNX2. Interacts with ELF3. Interacts with APLF (via KBM motif). The XRCC5/XRCC6 dimer associates in a DNA-dependent manner with APEX1. Identified in a complex with DEAF1 and XRCC6. Interacts with NR4A3; the DNA-dependent protein kinase complex DNA-PK phosphorylates and activates NR4A3 and prevents NR4A3 ubiquitinylation and degradation. Interacts with RNF138. Interacts with CYREN (via KBM motif). Interacts with WRN (via KBM motif). Interacts (via N-terminus) with HSF1 (via N-terminus); this interaction is direct and prevents XRCC5/XRCC6 heterodimeric binding and non-homologous end joining (NHEJ) repair activities induced by ionizing radiation (IR). Interacts with DHX9; this interaction occurs in a RNA-dependent manner. Part of the HDP-RNP complex composed of at least HEXIM1, PRKDC, XRCC5, XRCC6, paraspeckle proteins (SFPQ, NONO, PSPC1, RBM14, and MATR3) and NEAT1 RNA. Interacts with ERCC6. Interacts with ATF7. The XRCC5-XRCC6 dimer associates with ALKBH2. Interacts with TPRN; TPRN interacts with a number of DNA damage response proteins, is recruited to sites of DNA damage and may play a role in DNA damage repair. Interacts with ERCC6L2. Post-translationally, ADP-ribosylated by PARP3. In terms of processing, phosphorylated on serine residues. Phosphorylation by PRKDC may enhance helicase activity. Sumoylated. Post-translationally, ubiquitinated by RNF8 via 'Lys-48'-linked ubiquitination following DNA damage, leading to its degradation and removal from DNA damage sites. Ubiquitinated by RNF138, leading to remove the Ku complex from DNA breaks.

Its subcellular location is the nucleus. It is found in the nucleolus. The protein localises to the chromosome. Functionally, single-stranded DNA-dependent ATP-dependent helicase that plays a key role in DNA non-homologous end joining (NHEJ) by recruiting DNA-PK to DNA. Required for double-strand break repair and V(D)J recombination. Also has a role in chromosome translocation. The DNA helicase II complex binds preferentially to fork-like ends of double-stranded DNA in a cell cycle-dependent manner. It works in the 3'-5' direction. During NHEJ, the XRCC5-XRRC6 dimer performs the recognition step: it recognizes and binds to the broken ends of the DNA and protects them from further resection. Binding to DNA may be mediated by XRCC6. The XRCC5-XRRC6 dimer acts as a regulatory subunit of the DNA-dependent protein kinase complex DNA-PK by increasing the affinity of the catalytic subunit PRKDC to DNA by 100-fold. The XRCC5-XRRC6 dimer is probably involved in stabilizing broken DNA ends and bringing them together. The assembly of the DNA-PK complex to DNA ends is required for the NHEJ ligation step. The XRCC5-XRRC6 dimer probably also acts as a 5'-deoxyribose-5-phosphate lyase (5'-dRP lyase), by catalyzing the beta-elimination of the 5' deoxyribose-5-phosphate at an abasic site near double-strand breaks. XRCC5 probably acts as the catalytic subunit of 5'-dRP activity, and allows to 'clean' the termini of abasic sites, a class of nucleotide damage commonly associated with strand breaks, before such broken ends can be joined. The XRCC5-XRRC6 dimer together with APEX1 acts as a negative regulator of transcription. In association with NAA15, the XRCC5-XRRC6 dimer binds to the osteocalcin promoter and activates osteocalcin expression. As part of the DNA-PK complex, involved in the early steps of ribosome assembly by promoting the processing of precursor rRNA into mature 18S rRNA in the small-subunit processome. Binding to U3 small nucleolar RNA, recruits PRKDC and XRCC5/Ku86 to the small-subunit processome. Plays a role in the regulation of DNA virus-mediated innate immune response by assembling into the HDP-RNP complex, a complex that serves as a platform for IRF3 phosphorylation and subsequent innate immune response activation through the cGAS-STING pathway. The protein is X-ray repair cross-complementing protein 5 (Xrcc5) of Mus musculus (Mouse).